A 541-amino-acid polypeptide reads, in one-letter code: 1'-carboxy-chondrochloren decarboxylase (541 aa).

The region spanning 39–226 (TTHRIPAIIS…TRMTIWLAPR (188 aa)) is the FAD-binding PCMH-type domain.

It carries out the reaction 1'-carboxy-chondrochloren A + FAD + 2 H(+) = chondrochloren A + FADH2 + CO2. It catalyses the reaction 1'-carboxy-chondrochloren B + FAD + 2 H(+) = chondrochloren B + FADH2 + CO2. The protein operates within antibiotic biosynthesis. With respect to regulation, activity is not affected by the addition of EDTA or/and EGTA chelators or in the presence of external metals like Zn(2+), Mg(2+), Mn(2+) and Fe(2+). Activity is inhibited under low oxygen conditions. Oxidative decarboxylase involved in the biosynthesis of the antibiotics chondrochloren A and chondrochloren B. Catalyzes the decarboxylation of biologically inactive pre-chondrochloren A and pre-chondrochloren B to yield mature chondrochloren A and chondrochloren B, respectively. Cannot decarboxylate free L-tyrosine, 3-chloro-tyrosine or a number of chlorinated and non-chlorinated analog substrates containing variable N-acyl chains. The sequence is that of 1'-carboxy-chondrochloren decarboxylase from Chondromyces crocatus.